Consider the following 71-residue polypeptide: Beta-defensin 131A (71 aa).

An N-terminal signal peptide occupies residues 1–22 (MRVLFFVFGVLSLMFTVPPARS). 3 disulfide bridges follow: cysteine 29-cysteine 57, cysteine 37-cysteine 51, and cysteine 41-cysteine 58.

Belongs to the beta-defensin family.

It is found in the secreted. Its function is as follows. Has antibacterial activity. Upon stimulation with lipoteichoic acid, promotes cytokines and chemokines production and secretion. This Pan troglodytes (Chimpanzee) protein is Beta-defensin 131A.